The chain runs to 354 residues: NADH-quinone oxidoreductase subunit H (354 aa).

8 helical membrane-spanning segments follow: residues 23–43, 91–111, 124–144, 162–182, 203–223, 250–270, 291–311, and 330–350; these read LVRA…LILW, YIIA…VIPF, LLYV…AGWA, ISYE…TGSL, ILSW…ISGV, GMAF…ISAL, IPGF…FIWL, and IFIP…VSPW.

Belongs to the complex I subunit 1 family. NDH-1 is composed of 14 different subunits. Subunits NuoA, H, J, K, L, M, N constitute the membrane sector of the complex.

Its subcellular location is the cell inner membrane. The enzyme catalyses a quinone + NADH + 5 H(+)(in) = a quinol + NAD(+) + 4 H(+)(out). NDH-1 shuttles electrons from NADH, via FMN and iron-sulfur (Fe-S) centers, to quinones in the respiratory chain. The immediate electron acceptor for the enzyme in this species is believed to be ubiquinone. Couples the redox reaction to proton translocation (for every two electrons transferred, four hydrogen ions are translocated across the cytoplasmic membrane), and thus conserves the redox energy in a proton gradient. This subunit may bind ubiquinone. This is NADH-quinone oxidoreductase subunit H from Ralstonia pickettii (strain 12J).